A 464-amino-acid polypeptide reads, in one-letter code: 3-isopropylmalate dehydratase large subunit (464 aa).

[4Fe-4S] cluster contacts are provided by Cys-337, Cys-397, and Cys-400.

The protein belongs to the aconitase/IPM isomerase family. LeuC type 1 subfamily. As to quaternary structure, heterodimer of LeuC and LeuD. Requires [4Fe-4S] cluster as cofactor.

The catalysed reaction is (2R,3S)-3-isopropylmalate = (2S)-2-isopropylmalate. It functions in the pathway amino-acid biosynthesis; L-leucine biosynthesis; L-leucine from 3-methyl-2-oxobutanoate: step 2/4. Its function is as follows. Catalyzes the isomerization between 2-isopropylmalate and 3-isopropylmalate, via the formation of 2-isopropylmaleate. In Bacillus thuringiensis subsp. konkukian (strain 97-27), this protein is 3-isopropylmalate dehydratase large subunit.